The sequence spans 188 residues: mRNA transport factor GFD1 (188 aa).

The interval 1-128 is disordered; it reads MPLESIWADA…KTQSKQDTAS (128 aa). Over residues 18-28 the composition is skewed to basic residues; the sequence is KQKPSHKRSNN. The segment covering 29-44 has biased composition (low complexity); that stretch reads NKKNNNSRWSNESSSN. The span at 59-79 shows a compositional bias: basic and acidic residues; sequence GNHESKTKNKIKETLPREKKP. Phosphoserine occurs at positions 87, 106, and 111. The segment covering 112-128 has biased composition (low complexity); it reads PSKMKTTKTQSKQDTAS. Residues 119 to 164 are a coiled coil; sequence KTQSKQDTASKMKLLKKKIEEQREILQKTHHKNQQQQVLMDFLNDE.

As to quaternary structure, interacts with GLE1, NUP42, NAB2, ZDS1 and probably DBP5. Forms a complex with GLE1 and NAB2.

It is found in the cytoplasm. The protein resides in the nucleus. Its subcellular location is the nuclear pore complex. The protein localises to the nucleus membrane. Its function is as follows. High-copy suppressor of mutant alleles of ATP-dependent RNA helicase DBP5, which is involved in mRNA export from the nucleus. It may also play an important role in a late stage of NAB2-mRNA export. This chain is mRNA transport factor GFD1 (GFD1), found in Saccharomyces cerevisiae (strain ATCC 204508 / S288c) (Baker's yeast).